A 212-amino-acid polypeptide reads, in one-letter code: ATP phosphoribosyltransferase (212 aa).

This sequence belongs to the ATP phosphoribosyltransferase family. Short subfamily. Heteromultimer composed of HisG and HisZ subunits.

Its subcellular location is the cytoplasm. The enzyme catalyses 1-(5-phospho-beta-D-ribosyl)-ATP + diphosphate = 5-phospho-alpha-D-ribose 1-diphosphate + ATP. It functions in the pathway amino-acid biosynthesis; L-histidine biosynthesis; L-histidine from 5-phospho-alpha-D-ribose 1-diphosphate: step 1/9. Its function is as follows. Catalyzes the condensation of ATP and 5-phosphoribose 1-diphosphate to form N'-(5'-phosphoribosyl)-ATP (PR-ATP). Has a crucial role in the pathway because the rate of histidine biosynthesis seems to be controlled primarily by regulation of HisG enzymatic activity. This is ATP phosphoribosyltransferase from Geobacter metallireducens (strain ATCC 53774 / DSM 7210 / GS-15).